Reading from the N-terminus, the 1197-residue chain is Sensor protein EvgS (1197 aa).

The signal sequence occupies residues 1-21 (MKFLPYIFLLCCGLWSTISFA). Topologically, residues 22–325 (DEDYIEYRGI…SMTDENGSVR (304 aa)) are cytoplasmic. Residues 326–346 (GVMGDILNIITLQTGLNFSPI) traverse the membrane as a helical segment. At 347–537 (TVSHNIHAGT…TWDLYSEQFY (191 aa)) the chain is on the periplasmic side. Residues 538 to 558 (IVTTLSVLLVGSSLLWGFYLL) form a helical membrane-spanning segment. Over 559-1197 (RSVRRRKVIQ…EIAVFCQKND (639 aa)) the chain is Cytoplasmic. The region spanning 718–938 (TMSHEIRTPI…TFTITIPVEI (221 aa)) is the Histidine kinase domain. His-721 is modified (phosphohistidine; by autocatalysis). The Response regulatory domain maps to 960–1074 (SILIADDHPT…VLKTHLSQLH (115 aa)). Position 1009 is a 4-aspartylphosphate (Asp-1009). In terms of domain architecture, HPt spans 1098-1197 (DLQLMQEILM…EIAVFCQKND (100 aa)). His-1137 is modified (phosphohistidine).

In terms of processing, activation requires a sequential transfer of a phosphate group from a His in the primary transmitter domain, to an Asp in the receiver domain and to a His in the secondary transmitter domain.

The protein localises to the cell inner membrane. The catalysed reaction is ATP + protein L-histidine = ADP + protein N-phospho-L-histidine.. Its function is as follows. Member of the two-component regulatory system EvgS/EvgA. Phosphorylates EvgA via a four-step phosphorelay in response to environmental signals. The protein is Sensor protein EvgS (evgS) of Escherichia coli (strain K12).